Reading from the N-terminus, the 454-residue chain is MEAGERRNGDSMSHNHRAPKKPRLAGLLTESDIDSEFAHHQTGVARINNGSFGCCPGSVLEAQREWQLRYLRQPDEFYFNGLRRGLLASRTVISDLINADDVDEVSLVDNATTAAAIVLQKVGRCFSEGKYKKEDTVVMFHCAFQSVKKSIQAYVSRVGGSTVEVRLPFPVNSNEEIISKFREGLEKGRANGRTVRLAIIDHITSMPCVLMPVRELVKICREEGVEQVFVDAAHAIGSVKVDVKEIGADYYVSNLHKWFFCPPSIAFFYCKKRGSESDVHHPVVSHEFGNGLPIESAWIGTRDYSSQLVVPSVMEFVNRFEGGMEGIMMKNHDEAVRMGLMLADAWGTNLGSPPEMCVGMVMIGLPSKLCVGSDEDAIKLRSYLRVHYSVEVPVFYLGLRDGEEGVKDKDSGLITAYVRISHQVYNKTEDYERLRDAITELVKDQMTCQNLPAL.

The disordered stretch occupies residues 1-25 (MEAGERRNGDSMSHNHRAPKKPRLA). A compositionally biased stretch (basic residues) spans 14–23 (HNHRAPKKPR). Lys257 bears the N6-(pyridoxal phosphate)lysine mark.

It belongs to the class-V pyridoxal-phosphate-dependent aminotransferase family. Requires pyridoxal 5'-phosphate as cofactor. In terms of tissue distribution, highly expressed in stems and cauline leaves, and at lower levels in roots, rosette leaves and flowers.

The enzyme catalyses L-cysteine + H2O = hydrogen sulfide + pyruvate + NH4(+) + H(+). In terms of biological role, catalyzes the production of hydrogen sulfide (H2S) from cysteine. Is mainly responsible for the degradation of cysteine to generate H2S, a regulator of stomatal movement and closure. The protein is L-cysteine desulfhydrase (LCD) of Arabidopsis thaliana (Mouse-ear cress).